The chain runs to 337 residues: F420-dependent glucose-6-phosphate dehydrogenase 2 (337 aa).

D40 lines the coenzyme F420-(gamma-Glu)n pocket. H41 serves as the catalytic Proton donor. Coenzyme F420-(gamma-Glu)n is bound by residues T77 and 108 to 109 (TG). The active-site Proton acceptor is the E110. Coenzyme F420-(gamma-Glu)n is bound by residues N113, 178–179 (GG), and 181–182 (VV). Residues T196, K199, K260, and R284 each contribute to the substrate site.

It belongs to the F420-dependent glucose-6-phosphate dehydrogenase family. As to quaternary structure, homodimer.

It catalyses the reaction oxidized coenzyme F420-(gamma-L-Glu)(n) + D-glucose 6-phosphate + H(+) = 6-phospho-D-glucono-1,5-lactone + reduced coenzyme F420-(gamma-L-Glu)(n). Functionally, catalyzes the coenzyme F420-dependent oxidation of glucose 6-phosphate (G6P) to 6-phosphogluconolactone. The polypeptide is F420-dependent glucose-6-phosphate dehydrogenase 2 (Rhodococcus jostii (strain RHA1)).